The chain runs to 161 residues: MATPTLTFTSSDGVDIPVERDVAERSQLIKNMLEDLGETGEPIPIPNVNEAVLKKVIEWCTHHKNDPPSTGDDDDSRRKTTDIDEWDQKFMQVDQEMLFEIILAANYLDIKGLLDVGCKTVANMIKGKSPEEIRKTFNIQNDFTPEEEDQIRRENEWAEDR.

The interval 102 to 161 (ILAANYLDIKGLLDVGCKTVANMIKGKSPEEIRKTFNIQNDFTPEEEDQIRRENEWAEDR) is interaction with the F-box domain of F-box proteins.

The protein belongs to the SKP1 family. Component of the SCF (SKP1-CUL1-F-box protein) E3 ubiquitin ligase complexes.

It participates in protein modification; protein ubiquitination. Functionally, essential component of the SCF (SKP1-CUL1-F-box protein) E3 ubiquitin ligase complexes, which mediate the ubiquitination and subsequent proteasomal degradation of target proteins. Controls sulfur metabolite repression, probably by mediating the inactivation or degradation of the metR transcription factor. This Aspergillus flavus (strain ATCC 200026 / FGSC A1120 / IAM 13836 / NRRL 3357 / JCM 12722 / SRRC 167) protein is E3 ubiquitin ligase complex SCF subunit sconC (sconC).